A 585-amino-acid polypeptide reads, in one-letter code: MSPPSATAGDINHREVDPTIWRACAGASVQIPVLHSRVYYFPQGHVEHCCPLLSTLPSSTSPVPCIITSIQLLADPVTDEVFAHLILQPMTQQQFTPTNYSRFGRFDGDVDDNNKVTTFAKILTPSDANNGGGFSVPRFCADSVFPLLNFQIDPPVQKLYVTDIHGAVWDFRHIYRGTPRRHLLTTGWSKFVNSKKLIAGDSVVFMRKSADEMFIGVRRTPISSSDGGSSYYGGDEYNGYYSQSSVAKEDDGSPKKTFRRSGNGKLTAEAVTDAINRASQGLPFEVVFYPAAGWSEFVVRAEDVESSMSMYWTPGTRVKMAMETEDSSRITWFQGIVSSTYQETGPWRGSPWKQLQITWDEPEILQNVKRVNPWQVEIAAHATQLHTPFPPAKRLKYPQPGGGFLSGDDGEILYPQSGLSSAAAPDPSPSMFSYSTFPAGMQGARQYDFGSFNPTGFIGGNPPQLFTNNFLSPLPDLGKVSTEMMNFGSPPSDNLSPNSNTTNLSSGNDLVGNRGPLSKKVNSIQLFGKIITVEEHSESGPAESGLCEEDGSKESSDNETQLSLSHAPPSVPKHSNSNAGSSSQG.

A DNA-binding region (TF-B3) is located at residues 119 to 221; sequence FAKILTPSDA…EMFIGVRRTP (103 aa). Disordered stretches follow at residues 483–517 and 535–585; these read EMMN…RGPL and EHSE…SSQG. The segment covering 488–510 has biased composition (low complexity); that stretch reads GSPPSDNLSPNSNTTNLSSGNDL. Residues 573–585 are compositionally biased toward polar residues; sequence KHSNSNAGSSSQG.

The protein belongs to the ARF family. Homo and heterodimers.

The protein resides in the nucleus. In terms of biological role, auxin response factors (ARFs) are transcriptional factors that bind specifically to the DNA sequence 5'-TGTCTC-3' found in the auxin-responsive promoter elements (AuxREs). Could act as transcriptional activator or repressor. Formation of heterodimers with Aux/IAA proteins may alter their ability to modulate early auxin response genes expression. The protein is Auxin response factor 17 (ARF17) of Arabidopsis thaliana (Mouse-ear cress).